The primary structure comprises 162 residues: NADH-quinone oxidoreductase subunit I (162 aa).

4Fe-4S ferredoxin-type domains are found at residues 52-82 (LRRYPNGEERCIACKLCEAICPAQAITIEAG) and 93-122 (TRYDIDMVKCIYCGMCQEACPVDAIVEGPN). [4Fe-4S] cluster contacts are provided by Cys62, Cys65, Cys68, Cys72, Cys102, Cys105, Cys108, and Cys112.

The protein belongs to the complex I 23 kDa subunit family. NDH-1 is composed of 14 different subunits. Subunits NuoA, H, J, K, L, M, N constitute the membrane sector of the complex. The cofactor is [4Fe-4S] cluster.

The protein localises to the cell inner membrane. It carries out the reaction a quinone + NADH + 5 H(+)(in) = a quinol + NAD(+) + 4 H(+)(out). In terms of biological role, NDH-1 shuttles electrons from NADH, via FMN and iron-sulfur (Fe-S) centers, to quinones in the respiratory chain. The immediate electron acceptor for the enzyme in this species is believed to be ubiquinone. Couples the redox reaction to proton translocation (for every two electrons transferred, four hydrogen ions are translocated across the cytoplasmic membrane), and thus conserves the redox energy in a proton gradient. The polypeptide is NADH-quinone oxidoreductase subunit I (Methylorubrum extorquens (strain PA1) (Methylobacterium extorquens)).